Consider the following 1079-residue polypeptide: MEWLLEDLLGAKGDMGLLWGQLTHALACRHCGSSCFQSPGNLVTLFLFVVWQIQRWWQLGRLRQLHPWCSGNMVQGKELPLLHRVAFLDHLCKQKSEVEEEGEEEEEGEDEASLDPLKPCSPTKEAPTGEQATPAPPQPSCGSEGLLKAIGIPEQTVMQPVSPSRSFPIFQILTSFPVRHKIASGNRQQQRKSQLFWGLPSLHSESLEAIFLSSGGPSPLKWSVCSSVFFNKLAFLPRSNLLLPQYHSSAQFSTHGAHTMEDLEGMAPDPQLLPPPSSPSVSSLLLHLRPFPVDHKGVLSGAEAPTQSPGTSPLEVLPGYETHLETTGHKKMPQAFEPPMPPPCQSPASLSEPRKVSPEGGLAISKDFWGTVGYREKPQASESSMPVPCPPLDSLPELQRESSLEDPSRYKPQWECRENSGNLWAFESPVLDLNPELSGTSPECVPPASETPWKGMQSRENIWVPADPVSPPSLPSVPLLESLVMGPQGVLSESKALWETMGQKENLWASDSPDPVHSTPPTTLMEPHRINPGECLATSEATWKDTEHSRNSSASRSPSLALSPPPALAPELLRVRSMGVLSDSEARCGDIQKTKNSWASKHPACNLPQDLHGASPLGVLSDSQSIVGEMEQKENCVPVFPGRGSSPSSNSVSKSHVSEPIADQSNYKPDGEAVEQRKNHWATELPAPSSLSTPLPEPHIDLELVWRNVQQREVPQGPSPLAVDPLHPVPQPPTLAEAVKIERTHPGLPKGVTCPGVKAEAPLSQRWTVPELLTHPGIHAWQWSRELKLRLKKLRQSPASRAPGPSQSFCSSPILSSTIPDFWGLPSCPPQQIYPPNPCPHSSSCHPQEVQRTVPQPVQSSHCHHFQSSSQLQPQESGRAEQGSQRGEKMKGKMVSQVPSQGPCVHMEAGVDYLSPGPGEPSNSKVLVSGKRKDKASASSSAKKREHPRKPKAGDHRRGTARLGLSTVTGKNHPAQARSLVEAPVSTFPQRSQHRGQSSQHTALPQLLLPKASGPQDQPEAGRRASDILTPRHCKHCPWAHMEKYLSFPTLKASLTRGLQKVLAKCLDNHRPLPTKSSQ.

Disordered stretches follow at residues 97-145, 261-281, 297-317, 331-362, 376-412, 506-566, 637-678, and 840-975; these read EVEE…GSEG, EDLE…SPSV, GVLS…LEVL, KMPQ…EGGL, EKPQ…RYKP, NLWA…SPPP, VPVF…EQRK, and PHSS…NHPA. Positions 98–113 are enriched in acidic residues; sequence VEEEGEEEEEGEDEAS. Positions 336–345 are enriched in pro residues; it reads FEPPMPPPCQ. Residues 398–412 show a composition bias toward basic and acidic residues; sequence LQRESSLEDPSRYKP. Composition is skewed to low complexity over residues 551 to 562 and 645 to 655; these read NSSASRSPSLAL and SSPSSNSVSKS. A compositionally biased stretch (basic and acidic residues) spans 669 to 678; it reads PDGEAVEQRK. Residues 942 to 951 are compositionally biased toward basic residues; it reads AKKREHPRKP.

In terms of biological role, dispensable for normal development and fertility. This chain is Spermatogenesis-associated protein 31G1, found in Homo sapiens (Human).